Here is a 423-residue protein sequence, read N- to C-terminus: Lysosomal acid phosphatase (423 aa).

Positions 1–30 (MAGKRSGWSRAALLQLLLGVNLVVMPPTQA) are cleaved as a signal peptide. Topologically, residues 31–380 (RSLRFVTLLY…QVASGPADTE (350 aa)) are lumenal. His-42 acts as the Nucleophile in catalysis. Asn-92, Asn-133, Asn-167, Asn-177, Asn-191, and Asn-267 each carry an N-linked (GlcNAc...) asparagine glycan. 3 disulfides stabilise this stretch: Cys-159–Cys-370, Cys-212–Cys-310, and Cys-345–Cys-349. Asp-287 (proton donor) is an active-site residue. Residues Asn-322 and Asn-331 are each glycosylated (N-linked (GlcNAc...) asparagine). Residues 381–401 (VIVALAVCGSILFLLIVLLLT) traverse the membrane as a helical segment. Topologically, residues 402–423 (VLFRMQAQPPGYRHVADGEDHA) are cytoplasmic.

Belongs to the histidine acid phosphatase family. The membrane-bound form is converted to the soluble form by sequential proteolytic processing. First, the C-terminal cytoplasmic tail is removed. Cleavage by a lysosomal protease releases the soluble form in the lysosome lumen.

The protein resides in the lysosome membrane. The protein localises to the lysosome lumen. It catalyses the reaction a phosphate monoester + H2O = an alcohol + phosphate. This Pongo abelii (Sumatran orangutan) protein is Lysosomal acid phosphatase (ACP2).